Consider the following 136-residue polypeptide: Holo-[acyl-carrier-protein] synthase (136 aa).

Aspartate 8 and glutamate 57 together coordinate Mg(2+).

This sequence belongs to the P-Pant transferase superfamily. AcpS family. Mg(2+) serves as cofactor.

The protein resides in the cytoplasm. The enzyme catalyses apo-[ACP] + CoA = holo-[ACP] + adenosine 3',5'-bisphosphate + H(+). In terms of biological role, transfers the 4'-phosphopantetheine moiety from coenzyme A to a Ser of acyl-carrier-protein. The sequence is that of Holo-[acyl-carrier-protein] synthase from Azorhizobium caulinodans (strain ATCC 43989 / DSM 5975 / JCM 20966 / LMG 6465 / NBRC 14845 / NCIMB 13405 / ORS 571).